We begin with the raw amino-acid sequence, 147 residues long: Large ribosomal subunit protein bL9 (147 aa).

The protein belongs to the bacterial ribosomal protein bL9 family.

Binds to the 23S rRNA. This is Large ribosomal subunit protein bL9 from Halothermothrix orenii (strain H 168 / OCM 544 / DSM 9562).